The primary structure comprises 161 residues: Trivalent organoarsenical cleaving enzyme (161 aa).

The VOC domain maps to 2–119 (KYAHVGLNVT…DGNEWEFFYT (118 aa)). Positions 5 and 62 each coordinate Fe(2+). The roxarsone (III) site is built by C96 and C97. E115 is a binding site for Fe(2+).

Requires Fe(2+) as cofactor.

It catalyses the reaction methylarsonous acid + AH2 + O2 = arsenite + methanol + A + H(+). The enzyme catalyses roxarsone (III) + AH2 + O2 = 4-hydroxy-3-nitrocyclohexa-2,5-dien-1-one + arsenite + A + H(+). The catalysed reaction is nitarsone (III) + AH2 + O2 = 4-nitrocyclohexa-2,5-dien-1-one + arsenite + A + H(+). It carries out the reaction 4-aminophenylarsonous acid + AH2 + O2 = 4-aminocyclohexa-2,5-dien-1-one + arsenite + A. With respect to regulation, inhibited in vitro by reagents that chemically modify histidine residues (diethylpyrocarbonate (DEPC)), aspartate or glutamate residues (1-ethyl-3-(3-(dimethylamino)propyl) carbodiimide (EDC)), or cysteine residues (N-ethylmaleimide (NEM) or iodoacetamide (IAA)). In terms of biological role, nonheme iron-dependent dioxygenase that can break carbon-arsenic bonds, playing a role in the detoxification of environmental organoarsenical compounds. Catalyzes the oxygen-dependent demethylation of highly toxic methylarsonous acid (MAs(III)) to arsenite, which can then be exported out of the cell. Can also cleave the C-As bond in several trivalent aromatic arsenicals, including roxarsone (III), nitarsone (III) and (4-aminophenyl)arsonous acid. Organoarsenical degradation by this enzyme is proposed to have a significant impact on the arsenic biogeocycle that maintains a balance between organic and inorganic species. In Bacillus sp. (strain MD1), this protein is Trivalent organoarsenical cleaving enzyme.